We begin with the raw amino-acid sequence, 183 residues long: UPF0316 protein GTNG_0803 (183 aa).

3 helical membrane passes run 5-25, 33-53, and 59-79; these read IVLV…RTIF, LAAF…SIVF, and YIVM…LEDI.

This sequence belongs to the UPF0316 family.

The protein localises to the cell membrane. The chain is UPF0316 protein GTNG_0803 from Geobacillus thermodenitrificans (strain NG80-2).